A 145-amino-acid polypeptide reads, in one-letter code: D-aminoacyl-tRNA deacylase (145 aa).

Positions 137–138 match the Gly-cisPro motif, important for rejection of L-amino acids motif; it reads GP.

The protein belongs to the DTD family. Homodimer.

The protein resides in the cytoplasm. It carries out the reaction glycyl-tRNA(Ala) + H2O = tRNA(Ala) + glycine + H(+). It catalyses the reaction a D-aminoacyl-tRNA + H2O = a tRNA + a D-alpha-amino acid + H(+). An aminoacyl-tRNA editing enzyme that deacylates mischarged D-aminoacyl-tRNAs. Also deacylates mischarged glycyl-tRNA(Ala), protecting cells against glycine mischarging by AlaRS. Acts via tRNA-based rather than protein-based catalysis; rejects L-amino acids rather than detecting D-amino acids in the active site. By recycling D-aminoacyl-tRNA to D-amino acids and free tRNA molecules, this enzyme counteracts the toxicity associated with the formation of D-aminoacyl-tRNA entities in vivo and helps enforce protein L-homochirality. This Methylacidiphilum infernorum (isolate V4) (Methylokorus infernorum (strain V4)) protein is D-aminoacyl-tRNA deacylase.